We begin with the raw amino-acid sequence, 369 residues long: tRNA 2-selenouridine synthase (369 aa).

Residues 12–136 form the Rhodanese domain; that stretch reads FLDDIPLMDV…LRNFLFETTR (125 aa). The active-site S-selanylcysteine intermediate is Cys95.

Belongs to the SelU family. In terms of assembly, monomer.

The catalysed reaction is 5-methylaminomethyl-2-thiouridine(34) in tRNA + selenophosphate + (2E)-geranyl diphosphate + H2O + H(+) = 5-methylaminomethyl-2-selenouridine(34) in tRNA + (2E)-thiogeraniol + phosphate + diphosphate. It catalyses the reaction 5-methylaminomethyl-2-thiouridine(34) in tRNA + (2E)-geranyl diphosphate = 5-methylaminomethyl-S-(2E)-geranyl-thiouridine(34) in tRNA + diphosphate. It carries out the reaction 5-methylaminomethyl-S-(2E)-geranyl-thiouridine(34) in tRNA + selenophosphate + H(+) = 5-methylaminomethyl-2-(Se-phospho)selenouridine(34) in tRNA + (2E)-thiogeraniol. The enzyme catalyses 5-methylaminomethyl-2-(Se-phospho)selenouridine(34) in tRNA + H2O = 5-methylaminomethyl-2-selenouridine(34) in tRNA + phosphate. Involved in the post-transcriptional modification of the uridine at the wobble position (U34) of tRNA(Lys), tRNA(Glu) and tRNA(Gln). Catalyzes the conversion of 2-thiouridine (S2U-RNA) to 2-selenouridine (Se2U-RNA). Acts in a two-step process involving geranylation of 2-thiouridine (S2U) to S-geranyl-2-thiouridine (geS2U) and subsequent selenation of the latter derivative to 2-selenouridine (Se2U) in the tRNA chain. This chain is tRNA 2-selenouridine synthase, found in Pseudomonas aeruginosa (strain ATCC 15692 / DSM 22644 / CIP 104116 / JCM 14847 / LMG 12228 / 1C / PRS 101 / PAO1).